A 496-amino-acid polypeptide reads, in one-letter code: Maturase K (496 aa).

This sequence belongs to the intron maturase 2 family. MatK subfamily.

It localises to the plastid. The protein resides in the chloroplast. Its function is as follows. Usually encoded in the trnK tRNA gene intron. Probably assists in splicing its own and other chloroplast group II introns. In Paeonia lactiflora (Chinese peony), this protein is Maturase K.